A 310-amino-acid chain; its full sequence is Methionyl-tRNA formyltransferase (310 aa).

106 to 109 contributes to the (6S)-5,6,7,8-tetrahydrofolate binding site; it reads SLLP.

It belongs to the Fmt family.

It carries out the reaction L-methionyl-tRNA(fMet) + (6R)-10-formyltetrahydrofolate = N-formyl-L-methionyl-tRNA(fMet) + (6S)-5,6,7,8-tetrahydrofolate + H(+). Attaches a formyl group to the free amino group of methionyl-tRNA(fMet). The formyl group appears to play a dual role in the initiator identity of N-formylmethionyl-tRNA by promoting its recognition by IF2 and preventing the misappropriation of this tRNA by the elongation apparatus. In Fervidobacterium nodosum (strain ATCC 35602 / DSM 5306 / Rt17-B1), this protein is Methionyl-tRNA formyltransferase.